The following is a 314-amino-acid chain: Mitochondrial thiamine pyrophosphate carrier 1 (314 aa).

The next 6 helical transmembrane spans lie at 14–30, 84–100, 116–136, 170–186, 217–233, and 285–302; these read VAAW…GLLA, LLYV…YSLF, LVVG…FDVL, GSIA…SIMF, SAGT…TFPL, and GILV…VSFW. Solcar repeat units lie at residues 14–103, 110–195, and 210–310; these read VAAW…FNRY, EARL…IRIY, and ELAT…AIHY.

It belongs to the mitochondrial carrier (TC 2.A.29) family.

Its subcellular location is the mitochondrion inner membrane. Mitochondrial transporter that mediates uptake of thiamine pyrophosphate (ThPP) into mitochondria. In Saccharomyces cerevisiae (strain YJM789) (Baker's yeast), this protein is Mitochondrial thiamine pyrophosphate carrier 1 (TPC1).